We begin with the raw amino-acid sequence, 75 residues long: Peptide Ctri10033 (75 aa).

The N-terminal stretch at 1–22 (MNSKYLFVFLILIVTFTDLCQG) is a signal peptide. Arginine 43 carries the post-translational modification Arginine amide. The propeptide occupies 47–75 (ELGSQYDYLQDFRKRELDLDDLLSKFPDY).

Belongs to the non-disulfide-bridged peptide (NDBP) superfamily. Short antimicrobial peptide (group 4) family. In terms of tissue distribution, expressed by the venom gland.

Its subcellular location is the secreted. In Chaerilus tricostatus (Scorpion), this protein is Peptide Ctri10033.